The primary structure comprises 75 residues: Conotoxin ar11a (75 aa).

The N-terminal stretch at 1-19 (MKLCATFLLVLVTLPLVTG) is a signal peptide. A propeptide spanning residues 20 to 36 (EKSSERSLSGAILRGVR) is cleaved from the precursor. 4 disulfides stabilise this stretch: Cys39–Cys53, Cys46–Cys58, Cys52–Cys63, and Cys57–Cys70.

Expressed by the venom duct.

It localises to the secreted. In terms of biological role, both natural (L-Leu form) and synthetic (D-Leu from) peptides equally cause sensitivity to touch and body tremor. Neither L-Leu form nor D-Leu form is active on nerve-muscle preparation. This is Conotoxin ar11a from Conus arenatus (Sand-dusted cone).